Here is a 2327-residue protein sequence, read N- to C-terminus: Voltage-dependent N-type calcium channel subunit alpha-1B (2327 aa).

Residues 1–37 (MVRFGDELGGRYGGTGGGERARGGGAGGAGGPGQGGL) form a disordered region. Over 1–90 (MVRFGDELGG…DNVVRKYAKR (90 aa)) the chain is Cytoplasmic. Over residues 10 to 37 (GRYGGTGGGERARGGGAGGAGGPGQGGL) the composition is skewed to gly residues. Arginine 22 is subject to Omega-N-methylarginine. The I repeat unit spans residues 82-359 (NVVRKYAKRI…LVLGVLSGEF (278 aa)). A helical transmembrane segment spans residues 91–114 (ITEWPPFEYMILATIIANCIVLAL). Residues 115–131 (EQHLPDGDKTPMSERLD) are Extracellular-facing. Residues 132–152 (DTEPYFIGIFCFEAGIKIIAL) traverse the membrane as a helical segment. Residues 153–163 (GFVFHKGSYLR) are Cytoplasmic-facing. Residues 164–182 (NGWNVMDFVVVLTGILATA) traverse the membrane as a helical segment. Topologically, residues 183-187 (GTDFD) are extracellular. Residues 188 to 211 (LRTLRAVRVLRPLKLVSGIPSLQV) form a helical membrane-spanning segment. Topologically, residues 212-221 (VLKSIMKAMV) are cytoplasmic. The helical transmembrane segment at 222–244 (PLLQIGLLLFFAILMFAIIGLEF) threads the bilayer. Over 245-331 (YMGKFHKACF…NTNDAAGNTW (87 aa)) the chain is Extracellular. Asparagine 256 is a glycosylation site (N-linked (GlcNAc...) asparagine). The chain crosses the membrane as a helical span at residues 332 to 356 (NWLYFIPLIIIGSFFMLNLVLGVLS). Residues 357 to 482 (GEFAKERERV…FFIRRMVKAQ (126 aa)) lie on the Cytoplasmic side of the membrane. The tract at residues 379–396 (QQIERELNGYLEWIFKAE) is binding to the beta subunit. Serine 411 is modified (phosphoserine). Residue 451–458 (ASLKSGKT) participates in ATP binding. Residues 468–712 (EKMFRFFIRR…VFLAIAVDNL (245 aa)) form an II repeat. The helical transmembrane segment at 483-501 (SFYWVVLCVVALNTLCVAM) threads the bilayer. The Extracellular segment spans residues 502 to 511 (VHYNQPQRLT). The helical transmembrane segment at 512–534 (TALYFAEFVFLGLFLTEMSLKMY) threads the bilayer. The Cytoplasmic portion of the chain corresponds to 535–544 (GLGPRSYFRS). Serine 544 lines the a 1,2-diacyl-sn-glycero-3-phospho-(1D-myo-inositol-4,5-bisphosphate) pocket. A helical transmembrane segment spans residues 545–566 (SFNCFDFGVIVGSIFEVVWAAI). The Extracellular segment spans residues 567–573 (KPGTSFG). The chain crosses the membrane as a helical span at residues 574-586 (ISVLRALRLLRIF). Residues arginine 584 and lysine 587 each contribute to the a 1,2-diacyl-sn-glycero-3-phospho-(1D-myo-inositol-4,5-bisphosphate) site. Over 587 to 604 (KVTKYWNSLRNLVVSLLN) the chain is Cytoplasmic. The chain crosses the membrane as a helical span at residues 605–630 (SMKSIISLLFLLFLFIVVFALLGMQL). The Extracellular segment spans residues 631–682 (FGGQFNFQDETPTTNFDTFPAAILTVFQILTGEDWNAVMYHGIESQGGVSKG). The chain crosses the membrane as a helical span at residues 683–709 (MFSSFYFIVLTLFGNYTLLNVFLAIAV). The Cytoplasmic portion of the chain corresponds to 710 to 1140 (DNLANAQELT…FCHYIVTMRY (431 aa)). A phosphoserine mark is found at serine 745, serine 748, and serine 783. Disordered regions lie at residues 802–1015 (TRHV…KEPH) and 1042–1066 (EQPEDADNQRNVTRMGSQPSDPSTT). Basic and acidic residues-rich tracts occupy residues 805–826 (VRPDMKTHMDRPLVVEPGRDGL), 869–885 (EQDRTESTETGAREERA), 914–924 (GSPEEATEREP), 961–972 (GPREAENNEEPT), and 988–1015 (PEREAAEKESNAVEGDKETRNHQPKEPH). Residues 1050 to 1066 (QRNVTRMGSQPSDPSTT) show a composition bias toward polar residues. Phosphoserine is present on serine 1058. One copy of the III repeat lies at 1126–1412 (NLLRRFCHYI…IFVALIIITF (287 aa)). The helical transmembrane segment at 1141 to 1159 (FEMVILVVIALSSIALAAE) threads the bilayer. Residues 1160-1167 (DPVRTDSF) are Extracellular-facing. The chain crosses the membrane as a helical span at residues 1168 to 1192 (RNNALKYMDYIFTGVFTFEMVIKMI). The Cytoplasmic portion of the chain corresponds to 1193–1206 (DLGLLLHPGAYFRD). Residues 1207-1231 (LWNILDFIVVSGALVAFAFSSFMGG) traverse the membrane as a helical segment. The Extracellular segment spans residues 1232 to 1237 (SKGKDI). A helical transmembrane segment spans residues 1238–1258 (NTIKSLRVLRVLRPLKTIKRL). Residues 1259-1276 (PKLKAVFDCVVNSLKNVL) are Cytoplasmic-facing. Residues 1277-1296 (NILIVYMLFMFIFAVIAVQL) traverse the membrane as a helical segment. Residues 1297-1383 (FKGKFFYCTD…EQGPSPGFRM (87 aa)) are Extracellular-facing. A helical membrane pass occupies residues 1384–1409 (ELSIFYVVYFVVFPFFFVNIFVALII). Over 1410-1464 (ITFQEQGDKVMSECSLEKNERACIDFAISAKPLTRYMPQNKQSFQYKTWTFVVSP) the chain is Cytoplasmic. Residues 1449 to 1702 (NKQSFQYKTW…LFVAVIMDNF (254 aa)) form an IV repeat. Residues 1465-1483 (PFEYFIMAMIALNTVVLMM) traverse the membrane as a helical segment. Residues 1484 to 1491 (KFYDAPYE) lie on the Extracellular side of the membrane. Residues 1492–1516 (YELMLKCLNIVFTSMFSMECILKII) traverse the membrane as a helical segment. Topologically, residues 1517-1526 (AFGVLNYFRD) are cytoplasmic. Residues 1527–1548 (AWNVFDFVTVLGSITDILVTEI) form a helical membrane-spanning segment. Topologically, residues 1549–1554 (ANNFIN) are extracellular. Asparagine 1554 carries N-linked (GlcNAc...) asparagine glycosylation. The helical transmembrane segment at 1555–1573 (LSFLRLFRAARLIKLLRQG) threads the bilayer. Residues 1574 to 1592 (YTIRILLWTFVQSFKALPY) are Cytoplasmic-facing. Residues 1593–1612 (VCLLIAMLFFIYAIIGMQVF) form a helical membrane-spanning segment. The Extracellular segment spans residues 1613-1674 (GNIALDDDTS…ANASECGSDF (62 aa)). Asparagine 1666 carries an N-linked (GlcNAc...) asparagine glycan. Residues 1675–1698 (AYFYFVSFIFLCSFLMLNLFVAVI) form a helical membrane-spanning segment. Topologically, residues 1699–2327 (MDNFEYLTRD…YHHPDQDHWC (629 aa)) are cytoplasmic. The 36-residue stretch at 1715–1750 (HHLDEFIRVWAEYDPAACGRISYNDMFEMLKHMSPP) folds into the EF-hand domain. Ca(2+)-binding residues include aspartate 1728, arginine 1734, and aspartate 1739. The disordered stretch occupies residues 1972 to 2193 (TLRGPDGEPQ…TPRPSITYKT (222 aa)). The span at 2039 to 2053 (SHHHHHRCHRRRDKK) shows a compositional bias: basic residues. At serine 2056 the chain carries Phosphoserine. The segment covering 2088 to 2104 (CRRDRKQERGRSQERRQ) has biased composition (basic and acidic residues). Composition is skewed to polar residues over residues 2131–2141 (PSLSSHPTSPT) and 2152–2168 (GSGSVNGSPLMSTSGAS). Phosphoserine occurs at positions 2212, 2221, and 2244. 2 disordered regions span residues 2230 to 2249 (EPLSQPLAPGSRIGSDPYLG) and 2273 to 2292 (ATNSGRSSRTSYVSSLTSQS). Low complexity predominate over residues 2276–2292 (SGRSSRTSYVSSLTSQS).

Belongs to the calcium channel alpha-1 subunit (TC 1.A.1.11) family. CACNA1B subfamily. Multisubunit complex consisting of alpha-1, alpha-2, beta and delta subunits in a 1:1:1:1 ratio. The channel activity is directed by the pore-forming and voltage-sensitive alpha-1 subunit. In many cases, this subunit is sufficient to generate voltage-sensitive calcium channel activity. The auxiliary subunits beta and alpha-2/delta linked by a disulfide bridge regulate the channel activity. Interacts with RIMS1. Interacts with FMR1 (via C-terminus); this interaction induces a decrease in the number of presynaptic functional CACNA1B channels at the cell surface. Post-translationally, phosphorylated in vitro by CaM-kinase II, PKA, PKC and CGPK. Widespread expression throughout the brain. Highest levels in pyramidal cell layers C1, C2 and C3 of the hippocampus, in the dentate gyrus, in the cortex layers 2 et 4, in the subiculum and the habenula.

Its subcellular location is the membrane. It catalyses the reaction Ca(2+)(in) = Ca(2+)(out). With respect to regulation, is specifically blocked by omega-conotoxin GVIA. Is specifically blocked by omega-conotoxin MVIIA (ziconotide). Is insensitive to dihydropyridines (DHP). In terms of biological role, voltage-sensitive calcium channels (VSCC) mediate the entry of calcium ions into excitable cells and are also involved in a variety of calcium-dependent processes, including muscle contraction, hormone or neurotransmitter release, gene expression, cell motility, cell division and cell death. This alpha-1B subunit gives rise to N-type calcium currents. N-type calcium channels belong to the 'high-voltage activated' (HVA) group. They are involved in pain signaling. Calcium channels containing alpha-1B subunit may play a role in directed migration of immature neurons. Mediates Ca(2+) release probability at hippocampal neuronal soma and synaptic terminals. This Mus musculus (Mouse) protein is Voltage-dependent N-type calcium channel subunit alpha-1B (Cacna1b).